A 570-amino-acid chain; its full sequence is Arginine--tRNA ligase (570 aa).

Residues 127–137 (ANPTGPLHLGH) carry the 'HIGH' region motif.

It belongs to the class-I aminoacyl-tRNA synthetase family. In terms of assembly, monomer.

It is found in the cytoplasm. The catalysed reaction is tRNA(Arg) + L-arginine + ATP = L-arginyl-tRNA(Arg) + AMP + diphosphate. The sequence is that of Arginine--tRNA ligase from Neorickettsia sennetsu (strain ATCC VR-367 / Miyayama) (Ehrlichia sennetsu).